The sequence spans 557 residues: DNA mismatch repair protein MutL (557 aa).

This sequence belongs to the DNA mismatch repair MutL/HexB family.

This protein is involved in the repair of mismatches in DNA. It is required for dam-dependent methyl-directed DNA mismatch repair. May act as a 'molecular matchmaker', a protein that promotes the formation of a stable complex between two or more DNA-binding proteins in an ATP-dependent manner without itself being part of a final effector complex. The polypeptide is DNA mismatch repair protein MutL (Methanothrix thermoacetophila (strain DSM 6194 / JCM 14653 / NBRC 101360 / PT) (Methanosaeta thermophila)).